The following is a 207-amino-acid chain: ATP phosphoribosyltransferase (207 aa).

This sequence belongs to the ATP phosphoribosyltransferase family. Short subfamily. Heteromultimer composed of HisG and HisZ subunits.

The protein resides in the cytoplasm. The enzyme catalyses 1-(5-phospho-beta-D-ribosyl)-ATP + diphosphate = 5-phospho-alpha-D-ribose 1-diphosphate + ATP. It functions in the pathway amino-acid biosynthesis; L-histidine biosynthesis; L-histidine from 5-phospho-alpha-D-ribose 1-diphosphate: step 1/9. Its function is as follows. Catalyzes the condensation of ATP and 5-phosphoribose 1-diphosphate to form N'-(5'-phosphoribosyl)-ATP (PR-ATP). Has a crucial role in the pathway because the rate of histidine biosynthesis seems to be controlled primarily by regulation of HisG enzymatic activity. In Dictyoglomus turgidum (strain DSM 6724 / Z-1310), this protein is ATP phosphoribosyltransferase (hisG).